A 299-amino-acid chain; its full sequence is Formylglycine-generating enzyme (299 aa).

Positions 263 and 268 each coordinate Cu cation.

This sequence belongs to the sulfatase-modifying factor family. Cu cation serves as cofactor.

It catalyses the reaction L-cysteinyl-[sulfatase] + 2 a thiol + O2 = an organic disulfide + 3-oxo-L-alanyl-[sulfatase] + hydrogen sulfide + H2O + H(+). It functions in the pathway protein modification; sulfatase oxidation. Oxidase that catalyzes the conversion of cysteine to 3-oxoalanine on target proteins. 3-oxoalanine modification, which is also named formylglycine (fGly), occurs in the maturation of arylsulfatases and some alkaline phosphatases that use the hydrated form of 3-oxoalanine as a catalytic nucleophile. This is Formylglycine-generating enzyme from Mycobacterium tuberculosis (strain ATCC 25618 / H37Rv).